Here is a 493-residue protein sequence, read N- to C-terminus: Cysteine--tRNA ligase (493 aa).

Residue C29 coordinates Zn(2+). The 'HIGH' region signature appears at 31–41 (PTVYDFAHIGN). Zn(2+)-binding residues include C227, H252, and E256. A 'KMSKS' region motif is present at residues 285–289 (KMSKS). K288 contributes to the ATP binding site.

The protein belongs to the class-I aminoacyl-tRNA synthetase family. As to quaternary structure, monomer. It depends on Zn(2+) as a cofactor.

It localises to the cytoplasm. It carries out the reaction tRNA(Cys) + L-cysteine + ATP = L-cysteinyl-tRNA(Cys) + AMP + diphosphate. This chain is Cysteine--tRNA ligase, found in Rhodopseudomonas palustris (strain HaA2).